Consider the following 788-residue polypeptide: uncharacterized protein (788 aa).

The Adrift-type SAM-dependent 2'-O-MTase domain maps to 485-693; the sequence is EMITTAWIKL…IYIVLKSYKG (209 aa). Positions 521 and 604 each coordinate S-adenosyl-L-methionine. The active-site Proton acceptor is the Lys-645.

This is an uncharacterized protein from Acanthamoeba polyphaga (Amoeba).